The primary structure comprises 521 residues: GMP synthase [glutamine-hydrolyzing] (521 aa).

The 193-residue stretch at K5–G197 folds into the Glutamine amidotransferase type-1 domain. C81 acts as the Nucleophile in catalysis. Residues H171 and E173 contribute to the active site. Positions W198–R390 constitute a GMPS ATP-PPase domain. S225–S231 contacts ATP.

As to quaternary structure, homodimer.

It catalyses the reaction XMP + L-glutamine + ATP + H2O = GMP + L-glutamate + AMP + diphosphate + 2 H(+). It functions in the pathway purine metabolism; GMP biosynthesis; GMP from XMP (L-Gln route): step 1/1. Catalyzes the synthesis of GMP from XMP. This chain is GMP synthase [glutamine-hydrolyzing] (guaA), found in Neisseria meningitidis serogroup A / serotype 4A (strain DSM 15465 / Z2491).